We begin with the raw amino-acid sequence, 533 residues long: Subtilisin-like protease 1 (533 aa).

The first 19 residues, 1–19 (MGVFRFISISLAAVSAANA), serve as a signal peptide directing secretion. Positions 20 to 116 (AQILSMPHAQ…VEPDTIISVH (97 aa)) are excised as a propeptide. The Inhibitor I9 domain occupies 34 to 115 (SYIVMMKDDT…FVEPDTIISV (82 aa)). A Peptidase S8 domain is found at 126-400 (SWGLARISNP…NVLINNGGAK (275 aa)). Residues aspartate 158 and histidine 190 each act as charge relay system in the active site. A disordered region spans residues 175–198 (GSNQVNDGDDRDGSGHGTHTSGTM). N-linked (GlcNAc...) asparagine glycosylation is found at asparagine 233 and asparagine 251. The segment covering 282–294 (NDNQDAQSSSPAS) has biased composition (polar residues). The disordered stretch occupies residues 282-312 (NDNQDAQSSSPASEPSVCTVGSSAEDDSRSS). The active-site Charge relay system is the serine 345. Residues 378–394 (TSSITDAGPGTPTNVLI) are compositionally biased toward polar residues. The tract at residues 378 to 512 (TSSITDAGPG…YPGGDNFDFD (135 aa)) is disordered. Pro residues predominate over residues 405–470 (NPNPAPSPSP…FPGEPFPGEP (66 aa)). Residues 471–487 (FPGESFPGESFPGESAP) show a composition bias toward low complexity. Positions 488-502 (APAPMPPSPQHPHTP) are enriched in pro residues.

Belongs to the peptidase S8 family.

It localises to the secreted. In terms of biological role, secreted subtilisin-like serine protease with keratinolytic activity that contributes to pathogenicity. The chain is Subtilisin-like protease 1 (SUB1) from Arthroderma benhamiae (strain ATCC MYA-4681 / CBS 112371) (Trichophyton mentagrophytes).